The chain runs to 275 residues: 4-hydroxy-3-methylbut-2-enyl diphosphate reductase (275 aa).

C12 contacts [4Fe-4S] cluster. Positions 36 and 70 each coordinate (2E)-4-hydroxy-3-methylbut-2-enyl diphosphate. H36 and H70 together coordinate dimethylallyl diphosphate. H36 and H70 together coordinate isopentenyl diphosphate. C92 contributes to the [4Fe-4S] cluster binding site. H120 is a (2E)-4-hydroxy-3-methylbut-2-enyl diphosphate binding site. H120 is a binding site for dimethylallyl diphosphate. Isopentenyl diphosphate is bound at residue H120. Residue E122 is the Proton donor of the active site. Position 157 (T157) interacts with (2E)-4-hydroxy-3-methylbut-2-enyl diphosphate. C185 contributes to the [4Fe-4S] cluster binding site. The (2E)-4-hydroxy-3-methylbut-2-enyl diphosphate site is built by S213, S214, N215, and S257. Dimethylallyl diphosphate contacts are provided by S213, S214, N215, and S257. Residues S213, S214, N215, and S257 each coordinate isopentenyl diphosphate.

This sequence belongs to the IspH family. Requires [4Fe-4S] cluster as cofactor.

The catalysed reaction is isopentenyl diphosphate + 2 oxidized [2Fe-2S]-[ferredoxin] + H2O = (2E)-4-hydroxy-3-methylbut-2-enyl diphosphate + 2 reduced [2Fe-2S]-[ferredoxin] + 2 H(+). It catalyses the reaction dimethylallyl diphosphate + 2 oxidized [2Fe-2S]-[ferredoxin] + H2O = (2E)-4-hydroxy-3-methylbut-2-enyl diphosphate + 2 reduced [2Fe-2S]-[ferredoxin] + 2 H(+). Its pathway is isoprenoid biosynthesis; dimethylallyl diphosphate biosynthesis; dimethylallyl diphosphate from (2E)-4-hydroxy-3-methylbutenyl diphosphate: step 1/1. It participates in isoprenoid biosynthesis; isopentenyl diphosphate biosynthesis via DXP pathway; isopentenyl diphosphate from 1-deoxy-D-xylulose 5-phosphate: step 6/6. Its function is as follows. Catalyzes the conversion of 1-hydroxy-2-methyl-2-(E)-butenyl 4-diphosphate (HMBPP) into a mixture of isopentenyl diphosphate (IPP) and dimethylallyl diphosphate (DMAPP). Acts in the terminal step of the DOXP/MEP pathway for isoprenoid precursor biosynthesis. The chain is 4-hydroxy-3-methylbut-2-enyl diphosphate reductase from Nitratiruptor sp. (strain SB155-2).